A 350-amino-acid chain; its full sequence is MFS transporter OpS2 (350 aa).

Helical transmembrane passes span 3 to 23 (FLAG…VADL), 34 to 54 (GYFF…GGIL), 65 to 85 (WGAV…LPET), 141 to 161 (FMTC…NLAI), 174 to 194 (AIIL…ASVV), 227 to 247 (MCEN…VFGW), 253 to 273 (IFWF…SLIF), and 312 to 332 (PLLG…ICWA).

The protein belongs to the major facilitator superfamily.

The protein localises to the cell membrane. Its function is as follows. MFS transporter; part of the gene cluster that mediates the biosynthesis of the bibenzoquinone oosporein, a metabolite required for fungal virulence that acts by evading host immunity to facilitate fungal multiplication in insects. The function of this putative MFS transporter remains unclear since its deletion leads to increased oosporein production. The polypeptide is MFS transporter OpS2 (Beauveria bassiana (strain ARSEF 2860) (White muscardine disease fungus)).